Reading from the N-terminus, the 106-residue chain is Small ribosomal subunit protein bS20 (106 aa).

A compositionally biased stretch (basic residues) spans 1–32 (MAQKKPKRNLSALKRHRQSLKRRLRNKAKKSA). The tract at residues 1–33 (MAQKKPKRNLSALKRHRQSLKRRLRNKAKKSAI) is disordered.

It belongs to the bacterial ribosomal protein bS20 family.

Binds directly to 16S ribosomal RNA. This Thermus thermophilus (strain ATCC BAA-163 / DSM 7039 / HB27) protein is Small ribosomal subunit protein bS20 (rpsT).